A 266-amino-acid polypeptide reads, in one-letter code: tRNA pseudouridine synthase A (266 aa).

Asp-57 serves as the catalytic Nucleophile. Tyr-115 provides a ligand contact to substrate.

Belongs to the tRNA pseudouridine synthase TruA family. Homodimer.

The enzyme catalyses uridine(38/39/40) in tRNA = pseudouridine(38/39/40) in tRNA. In terms of biological role, formation of pseudouridine at positions 38, 39 and 40 in the anticodon stem and loop of transfer RNAs. In Buchnera aphidicola subsp. Acyrthosiphon pisum (strain Tuc7), this protein is tRNA pseudouridine synthase A.